The chain runs to 896 residues: Alanine--tRNA ligase (896 aa).

Zn(2+)-binding residues include His599, His603, Cys707, and His711.

This sequence belongs to the class-II aminoacyl-tRNA synthetase family. Requires Zn(2+) as cofactor.

It localises to the cytoplasm. The catalysed reaction is tRNA(Ala) + L-alanine + ATP = L-alanyl-tRNA(Ala) + AMP + diphosphate. Functionally, catalyzes the attachment of alanine to tRNA(Ala) in a two-step reaction: alanine is first activated by ATP to form Ala-AMP and then transferred to the acceptor end of tRNA(Ala). Also edits incorrectly charged Ser-tRNA(Ala) and Gly-tRNA(Ala) via its editing domain. The polypeptide is Alanine--tRNA ligase (Pyrobaculum calidifontis (strain DSM 21063 / JCM 11548 / VA1)).